The chain runs to 64 residues: Small ribosomal subunit protein eS17 (64 aa).

The protein belongs to the eukaryotic ribosomal protein eS17 family.

This Methanosarcina acetivorans (strain ATCC 35395 / DSM 2834 / JCM 12185 / C2A) protein is Small ribosomal subunit protein eS17.